The following is a 236-amino-acid chain: Ribosome maturation protein SDO1 homolog (236 aa).

Belongs to the SDO1/SBDS family.

This is Ribosome maturation protein SDO1 homolog from Pyrococcus abyssi (strain GE5 / Orsay).